A 364-amino-acid chain; its full sequence is tRNA 2-selenouridine synthase (364 aa).

The region spanning 14–137 (LIADTPIIDV…LRQTAIQATI (124 aa)) is the Rhodanese domain. The S-selanylcysteine intermediate role is filled by Cys-97.

Belongs to the SelU family. Monomer.

The catalysed reaction is 5-methylaminomethyl-2-thiouridine(34) in tRNA + selenophosphate + (2E)-geranyl diphosphate + H2O + H(+) = 5-methylaminomethyl-2-selenouridine(34) in tRNA + (2E)-thiogeraniol + phosphate + diphosphate. It carries out the reaction 5-methylaminomethyl-2-thiouridine(34) in tRNA + (2E)-geranyl diphosphate = 5-methylaminomethyl-S-(2E)-geranyl-thiouridine(34) in tRNA + diphosphate. The enzyme catalyses 5-methylaminomethyl-S-(2E)-geranyl-thiouridine(34) in tRNA + selenophosphate + H(+) = 5-methylaminomethyl-2-(Se-phospho)selenouridine(34) in tRNA + (2E)-thiogeraniol. It catalyses the reaction 5-methylaminomethyl-2-(Se-phospho)selenouridine(34) in tRNA + H2O = 5-methylaminomethyl-2-selenouridine(34) in tRNA + phosphate. In terms of biological role, involved in the post-transcriptional modification of the uridine at the wobble position (U34) of tRNA(Lys), tRNA(Glu) and tRNA(Gln). Catalyzes the conversion of 2-thiouridine (S2U-RNA) to 2-selenouridine (Se2U-RNA). Acts in a two-step process involving geranylation of 2-thiouridine (S2U) to S-geranyl-2-thiouridine (geS2U) and subsequent selenation of the latter derivative to 2-selenouridine (Se2U) in the tRNA chain. The polypeptide is tRNA 2-selenouridine synthase (Escherichia coli O81 (strain ED1a)).